A 513-amino-acid polypeptide reads, in one-letter code: ATP synthase subunit alpha 1 (513 aa).

169–176 contacts ATP; it reads GDRQCGKT.

It belongs to the ATPase alpha/beta chains family. F-type ATPases have 2 components, CF(1) - the catalytic core - and CF(0) - the membrane proton channel. CF(1) has five subunits: alpha(3), beta(3), gamma(1), delta(1), epsilon(1). CF(0) has three main subunits: a(1), b(2) and c(9-12). The alpha and beta chains form an alternating ring which encloses part of the gamma chain. CF(1) is attached to CF(0) by a central stalk formed by the gamma and epsilon chains, while a peripheral stalk is formed by the delta and b chains.

It is found in the cell inner membrane. It catalyses the reaction ATP + H2O + 4 H(+)(in) = ADP + phosphate + 5 H(+)(out). Functionally, produces ATP from ADP in the presence of a proton gradient across the membrane. The alpha chain is a regulatory subunit. This Burkholderia thailandensis (strain ATCC 700388 / DSM 13276 / CCUG 48851 / CIP 106301 / E264) protein is ATP synthase subunit alpha 1.